A 137-amino-acid polypeptide reads, in one-letter code: Nucleoside diphosphate kinase (137 aa).

6 residues coordinate ATP: Lys9, Phe57, Arg85, Thr91, Arg102, and Asn112. The active-site Pros-phosphohistidine intermediate is His115.

It belongs to the NDK family. Homotetramer. Mg(2+) serves as cofactor.

The protein resides in the cytoplasm. The catalysed reaction is a 2'-deoxyribonucleoside 5'-diphosphate + ATP = a 2'-deoxyribonucleoside 5'-triphosphate + ADP. The enzyme catalyses a ribonucleoside 5'-diphosphate + ATP = a ribonucleoside 5'-triphosphate + ADP. In terms of biological role, major role in the synthesis of nucleoside triphosphates other than ATP. The ATP gamma phosphate is transferred to the NDP beta phosphate via a ping-pong mechanism, using a phosphorylated active-site intermediate. This Campylobacter jejuni subsp. doylei (strain ATCC BAA-1458 / RM4099 / 269.97) protein is Nucleoside diphosphate kinase.